The primary structure comprises 111 residues: Toxin 3FTx-Tel4 (111 aa).

The first 19 residues, 1–19, serve as a signal peptide directing secretion; that stretch reads MKTLLLALVVVAFMCLGSA. Positions 20–34 are excised as a propeptide; that stretch reads DQLGLGSQRIDWEQG. Residue Q35 is modified to Pyrrolidone carboxylic acid. Intrachain disulfides connect C44–C68, C47–C55, C61–C87, C91–C102, and C103–C108.

This sequence belongs to the three-finger toxin family. Ancestral subfamily. Boigatoxin sub-subfamily. In terms of tissue distribution, expressed by the venom gland.

It is found in the secreted. In terms of biological role, potent postsynaptic neurotoxin. Displays readily reversible competitive antagonism at the nicotinic acetylcholine receptor (nAChR). This chain is Toxin 3FTx-Tel4, found in Telescopus dhara (Egyptian catsnake).